The primary structure comprises 296 residues: MQDRFIRSITQLPTPLADALIPMLHQNFAGHLDAQQLATLTSASKMTEAEVLLALLPIAAALAKPPISEFYVGAIAKGKSGDIYMGANLELPGEALFHSVHAEQSAISHAWLSGESQIVDIIVNASPCGHCRQFMNELVEGSKISIHLPAQESHPLAYYLPYAFGPKDLNVTSPLMAKQQTEFALDSADPMIIEGLDHAGLSYAPYTQSFAAVVLETRDGATYCGRYAENAAFNPSMLPMQMALSNLVRHNREFSDISRAVLIESSQGKISLVGATMDALHTVAAIELEHIVIDPV.

CMP/dCMP-type deaminase domains follow at residues 47–167 (TEAE…FGPK) and 186–296 (DSAD…IDPV). 88–90 (NLE) provides a ligand contact to substrate. Residue His101 coordinates Zn(2+). Glu103 functions as the Proton donor in the catalytic mechanism. Residues Cys128 and Cys131 each coordinate Zn(2+).

Belongs to the cytidine and deoxycytidylate deaminase family. Homodimer. Zn(2+) is required as a cofactor.

It catalyses the reaction cytidine + H2O + H(+) = uridine + NH4(+). It carries out the reaction 2'-deoxycytidine + H2O + H(+) = 2'-deoxyuridine + NH4(+). Its function is as follows. This enzyme scavenges exogenous and endogenous cytidine and 2'-deoxycytidine for UMP synthesis. The protein is Cytidine deaminase of Shewanella baltica (strain OS155 / ATCC BAA-1091).